An 872-amino-acid polypeptide reads, in one-letter code: Probable LRR receptor-like serine/threonine-protein kinase At1g51880 (872 aa).

The signal sequence occupies residues 1-23; the sequence is MKSIHGFLLFLITAYVILESVQA. The Extracellular portion of the chain corresponds to 24-513; it reads QDQLGFISLD…GKSKKVPMIP (490 aa). 9 N-linked (GlcNAc...) asparagine glycosylation sites follow: Asn-40, Asn-49, Asn-96, Asn-181, Asn-255, Asn-268, Asn-294, Asn-339, and Asn-401. LRR repeat units follow at residues 411–434, 435–457, and 459–482; these read RIIS…SKLT, QLIE…FADM, and LLKL…IQQR. 2 N-linked (GlcNAc...) asparagine glycosylation sites follow: Asn-464 and Asn-472. Residues 514–534 traverse the membrane as a helical segment; sequence IVASVAGVFALLVILAIFFVV. The Cytoplasmic portion of the chain corresponds to 535-872; it reads RRKNGESNKG…SASEFSPGAR (338 aa). Residue Thr-557 is modified to Phosphothreonine. Residues 566-838 enclose the Protein kinase domain; sequence NNFERVLGKG…HVVTELNECV (273 aa). ATP contacts are provided by residues 572-580 and Lys-593; that span reads LGKGGFGTV. Tyr-638 carries the phosphotyrosine modification. The active-site Proton acceptor is the Asp-690. A Phosphoserine modification is found at Ser-724. Thr-725 and Thr-730 each carry phosphothreonine. The residue at position 738 (Tyr-738) is a Phosphotyrosine.

Belongs to the protein kinase superfamily. Ser/Thr protein kinase family.

The protein resides in the membrane. The enzyme catalyses L-seryl-[protein] + ATP = O-phospho-L-seryl-[protein] + ADP + H(+). The catalysed reaction is L-threonyl-[protein] + ATP = O-phospho-L-threonyl-[protein] + ADP + H(+). In Arabidopsis thaliana (Mouse-ear cress), this protein is Probable LRR receptor-like serine/threonine-protein kinase At1g51880.